We begin with the raw amino-acid sequence, 599 residues long: Sulfite reductase [NADPH] flavoprotein alpha-component (599 aa).

In terms of domain architecture, Flavodoxin-like spans 64-202 (VTLISASQTG…AASEWRACVV (139 aa)). FMN-binding positions include 70–75 (SQTGNA), 117–120 (STQG), and 153–162 (LGDTSYEFFC). Residues 234 to 448 (DAPLTATLSV…IEHNDNFRLP (215 aa)) form the FAD-binding FR-type domain. FAD-binding positions include Thr322, Ala356, 386-389 (RLYS), 404-406 (TVG), Tyr410, and 419-422 (GGAS). Residues 519 to 520 (SR), 525 to 529 (KIYVQ), and Asp561 each bind NADP(+). An FAD-binding site is contributed by Tyr599.

This sequence belongs to the NADPH-dependent sulphite reductase flavoprotein subunit CysJ family. The protein in the N-terminal section; belongs to the flavodoxin family. In the C-terminal section; belongs to the flavoprotein pyridine nucleotide cytochrome reductase family. As to quaternary structure, alpha(8)-beta(8). The alpha component is a flavoprotein, the beta component is a hemoprotein. The cofactor is FAD. FMN serves as cofactor.

The enzyme catalyses hydrogen sulfide + 3 NADP(+) + 3 H2O = sulfite + 3 NADPH + 4 H(+). It functions in the pathway sulfur metabolism; hydrogen sulfide biosynthesis; hydrogen sulfide from sulfite (NADPH route): step 1/1. Its function is as follows. Component of the sulfite reductase complex that catalyzes the 6-electron reduction of sulfite to sulfide. This is one of several activities required for the biosynthesis of L-cysteine from sulfate. The flavoprotein component catalyzes the electron flow from NADPH -&gt; FAD -&gt; FMN to the hemoprotein component. The chain is Sulfite reductase [NADPH] flavoprotein alpha-component from Salmonella typhi.